We begin with the raw amino-acid sequence, 112 residues long: Large ribosomal subunit protein eL30z (112 aa).

It belongs to the eukaryotic ribosomal protein eL30 family.

The polypeptide is Large ribosomal subunit protein eL30z (RPL30A) (Arabidopsis thaliana (Mouse-ear cress)).